The primary structure comprises 909 residues: Tubulin polyglutamylase TTLL7 (909 aa).

The TTL domain occupies 40–392 (NGAITANVVG…RASDKKKNLA (353 aa)). Residues lysine 162, 168–169 (MG), 190–193 (QEYL), and 203–205 (KFD) contribute to the ATP site. Arginine 229 contributes to the L-glutamate binding site. ATP is bound at residue 251–252 (TN). Positions 253, 254, and 273 each coordinate L-glutamate. 3 residues coordinate Mg(2+): aspartate 338, glutamate 351, and asparagine 353. An L-glutamate-binding site is contributed by lysine 369. The interval 390 to 452 (NLAKQKAEAQ…ISREEYENRH (63 aa)) is c-MTBD region. Disordered stretches follow at residues 517 to 580 (DEKL…KVSY) and 603 to 688 (KAAR…PSIS). Residues 518-531 (EKLSGKPTRPKEPR) show a composition bias toward basic and acidic residues. Over residues 532 to 542 (TLSSMPESTQT) the composition is skewed to polar residues. Residues 548-562 (NYSSHSSSNSTGSSS) are compositionally biased toward low complexity. The segment covering 571–580 (KEGKEKKVSY) has biased composition (basic and acidic residues). Residues 604-625 (AARPFSNSSSPSSAASMRRSVS) are compositionally biased toward low complexity. Residues 626–657 (CPRSITALNTQSPTTDQRPFSSRISSTITRPL) are compositionally biased toward polar residues. The span at 658-673 (SGNRTNSLNRSSSSNR) shows a compositional bias: low complexity. The span at 674-688 (VPQSGTSGSVYPSIS) shows a compositional bias: polar residues.

Belongs to the tubulin--tyrosine ligase family. In terms of assembly, interacts with both alpha- and beta-tubulin (via C-terminal tubulin tails). It depends on Mg(2+) as a cofactor.

It localises to the cell projection. Its subcellular location is the cilium. The protein localises to the cytoplasm. It is found in the cytoskeleton. The protein resides in the cilium basal body. It localises to the dendrite. Its subcellular location is the perikaryon. It catalyses the reaction L-glutamyl-[protein] + L-glutamate + ATP = gamma-L-glutamyl-L-glutamyl-[protein] + ADP + phosphate + H(+). It carries out the reaction (L-glutamyl)(n)-gamma-L-glutamyl-L-glutamyl-[protein] + L-glutamate + ATP = (L-glutamyl)(n+1)-gamma-L-glutamyl-L-glutamyl-[protein] + ADP + phosphate + H(+). Functionally, polyglutamylase which modifies tubulin, generating polyglutamate side chains of variable lengths on the gamma-carboxyl group of specific glutamate residues within the C-terminal tail of tubulin. Mediates both ATP-dependent initiation and elongation steps of the polyglutamylation reaction. Preferentially modifies the beta-tubulin tail over an alpha-tail. Competes with monoglycylase TTLL3 for modification site on beta-tubulin substrate, thereby creating an anticorrelation between glycylation and glutamylation reactions. This is Tubulin polyglutamylase TTLL7 from Xenopus tropicalis (Western clawed frog).